The sequence spans 128 residues: Aspartate 1-decarboxylase (128 aa).

The Schiff-base intermediate with substrate; via pyruvic acid role is filled by serine 25. The residue at position 25 (serine 25) is a Pyruvic acid (Ser). Threonine 57 serves as a coordination point for substrate. Tyrosine 58 serves as the catalytic Proton donor. A substrate-binding site is contributed by 73-75 (GSA).

It belongs to the PanD family. Heterooctamer of four alpha and four beta subunits. Pyruvate serves as cofactor. Post-translationally, is synthesized initially as an inactive proenzyme, which is activated by self-cleavage at a specific serine bond to produce a beta-subunit with a hydroxyl group at its C-terminus and an alpha-subunit with a pyruvoyl group at its N-terminus.

Its subcellular location is the cytoplasm. The enzyme catalyses L-aspartate + H(+) = beta-alanine + CO2. It participates in cofactor biosynthesis; (R)-pantothenate biosynthesis; beta-alanine from L-aspartate: step 1/1. Catalyzes the pyruvoyl-dependent decarboxylation of aspartate to produce beta-alanine. This Burkholderia ambifaria (strain ATCC BAA-244 / DSM 16087 / CCUG 44356 / LMG 19182 / AMMD) (Burkholderia cepacia (strain AMMD)) protein is Aspartate 1-decarboxylase.